A 300-amino-acid polypeptide reads, in one-letter code: N-acetylmuramic acid 6-phosphate etherase (300 aa).

In terms of domain architecture, SIS spans 57-220; it reads IAVAFQSGGR…TTGAMIRTGK (164 aa). Glu85 functions as the Proton donor in the catalytic mechanism. Glu116 is a catalytic residue.

This sequence belongs to the GCKR-like family. MurNAc-6-P etherase subfamily. Homodimer.

The catalysed reaction is N-acetyl-D-muramate 6-phosphate + H2O = N-acetyl-D-glucosamine 6-phosphate + (R)-lactate. The protein operates within amino-sugar metabolism; 1,6-anhydro-N-acetylmuramate degradation. It functions in the pathway amino-sugar metabolism; N-acetylmuramate degradation. Its pathway is cell wall biogenesis; peptidoglycan recycling. Functionally, specifically catalyzes the cleavage of the D-lactyl ether substituent of MurNAc 6-phosphate, producing GlcNAc 6-phosphate and D-lactate. Together with AnmK, is also required for the utilization of anhydro-N-acetylmuramic acid (anhMurNAc) either imported from the medium or derived from its own cell wall murein, and thus plays a role in cell wall recycling. This chain is N-acetylmuramic acid 6-phosphate etherase, found in Aliivibrio fischeri (strain ATCC 700601 / ES114) (Vibrio fischeri).